The chain runs to 104 residues: L-rhamnose mutarotase (104 aa).

Tyrosine 18 contributes to the substrate binding site. The active-site Proton donor is the histidine 22. Substrate-binding positions include tyrosine 41 and 76-77; that span reads WW.

The protein belongs to the rhamnose mutarotase family. Homodimer.

The protein localises to the cytoplasm. It carries out the reaction alpha-L-rhamnose = beta-L-rhamnose. It functions in the pathway carbohydrate metabolism; L-rhamnose metabolism. In terms of biological role, involved in the anomeric conversion of L-rhamnose. In Shigella dysenteriae serotype 1 (strain Sd197), this protein is L-rhamnose mutarotase.